The chain runs to 64 residues: U-myrmeciitoxin(01)-Mg4b (64 aa).

An N-terminal signal peptide occupies residues 1-25; it reads MGKIFFFVLMIAIIGSTFLIEEALG.

It belongs to the ant myrmeciitoxin-01 family. In terms of assembly, homodimer; disulfide-linked. In terms of processing, contains 2 intrachain disulfide bonds (per chain) and 1 interchain disulfide bond. In terms of tissue distribution, expressed by the venom gland.

The protein resides in the secreted. May have antimicrobial properties, like most ant linear peptides. This is U-myrmeciitoxin(01)-Mg4b from Myrmecia gulosa (Red bulldog ant).